The primary structure comprises 332 residues: Fructose-1,6-bisphosphatase class 1 1 (332 aa).

Positions 92, 115, 117, and 118 each coordinate Mg(2+). Substrate is bound by residues 118-121 (DGSS), Asn-211, Tyr-244, 262-264 (YLY), and Lys-274. Glu-280 serves as a coordination point for Mg(2+).

It belongs to the FBPase class 1 family. As to quaternary structure, homotetramer. Requires Mg(2+) as cofactor.

Its subcellular location is the cytoplasm. The catalysed reaction is beta-D-fructose 1,6-bisphosphate + H2O = beta-D-fructose 6-phosphate + phosphate. Its pathway is carbohydrate biosynthesis; gluconeogenesis. The chain is Fructose-1,6-bisphosphatase class 1 1 from Christiangramia forsetii (strain DSM 17595 / CGMCC 1.15422 / KT0803) (Gramella forsetii).